A 442-amino-acid chain; its full sequence is Glutamyl-tRNA reductase (442 aa).

Substrate-binding positions include 50-53 (TCNR), Ser109, 114-116 (EPQ), and Gln120. The active-site Nucleophile is the Cys51. 189–194 (GAGEMA) is an NADP(+) binding site.

Belongs to the glutamyl-tRNA reductase family. Homodimer.

The catalysed reaction is (S)-4-amino-5-oxopentanoate + tRNA(Glu) + NADP(+) = L-glutamyl-tRNA(Glu) + NADPH + H(+). Its pathway is porphyrin-containing compound metabolism; protoporphyrin-IX biosynthesis; 5-aminolevulinate from L-glutamyl-tRNA(Glu): step 1/2. Catalyzes the NADPH-dependent reduction of glutamyl-tRNA(Glu) to glutamate 1-semialdehyde (GSA). The polypeptide is Glutamyl-tRNA reductase (Nitratidesulfovibrio vulgaris (strain DSM 19637 / Miyazaki F) (Desulfovibrio vulgaris)).